The following is a 315-amino-acid chain: 4-hydroxy-3-methylbut-2-enyl diphosphate reductase (315 aa).

Cys12 contributes to the [4Fe-4S] cluster binding site. (2E)-4-hydroxy-3-methylbut-2-enyl diphosphate-binding residues include His41 and His74. Dimethylallyl diphosphate is bound by residues His41 and His74. His41 and His74 together coordinate isopentenyl diphosphate. Cys96 lines the [4Fe-4S] cluster pocket. A (2E)-4-hydroxy-3-methylbut-2-enyl diphosphate-binding site is contributed by His124. His124 is a dimethylallyl diphosphate binding site. Residue His124 participates in isopentenyl diphosphate binding. Glu126 serves as the catalytic Proton donor. (2E)-4-hydroxy-3-methylbut-2-enyl diphosphate is bound at residue Thr168. Cys198 lines the [4Fe-4S] cluster pocket. (2E)-4-hydroxy-3-methylbut-2-enyl diphosphate contacts are provided by Ser226, Ser227, Asn228, and Ser270. Positions 226, 227, 228, and 270 each coordinate dimethylallyl diphosphate. The isopentenyl diphosphate site is built by Ser226, Ser227, Asn228, and Ser270.

It belongs to the IspH family. Requires [4Fe-4S] cluster as cofactor.

The enzyme catalyses isopentenyl diphosphate + 2 oxidized [2Fe-2S]-[ferredoxin] + H2O = (2E)-4-hydroxy-3-methylbut-2-enyl diphosphate + 2 reduced [2Fe-2S]-[ferredoxin] + 2 H(+). It carries out the reaction dimethylallyl diphosphate + 2 oxidized [2Fe-2S]-[ferredoxin] + H2O = (2E)-4-hydroxy-3-methylbut-2-enyl diphosphate + 2 reduced [2Fe-2S]-[ferredoxin] + 2 H(+). The protein operates within isoprenoid biosynthesis; dimethylallyl diphosphate biosynthesis; dimethylallyl diphosphate from (2E)-4-hydroxy-3-methylbutenyl diphosphate: step 1/1. Its pathway is isoprenoid biosynthesis; isopentenyl diphosphate biosynthesis via DXP pathway; isopentenyl diphosphate from 1-deoxy-D-xylulose 5-phosphate: step 6/6. Its function is as follows. Catalyzes the conversion of 1-hydroxy-2-methyl-2-(E)-butenyl 4-diphosphate (HMBPP) into a mixture of isopentenyl diphosphate (IPP) and dimethylallyl diphosphate (DMAPP). Acts in the terminal step of the DOXP/MEP pathway for isoprenoid precursor biosynthesis. The protein is 4-hydroxy-3-methylbut-2-enyl diphosphate reductase of Pseudomonas putida (strain GB-1).